We begin with the raw amino-acid sequence, 507 residues long: Probable circularly permuted 1,3-beta-glucanase P23A10.11c YJL171C (507 aa).

The first 22 residues, 1–22 (MIAKSFIASFLFLCFAFSGVKA), serve as a signal peptide directing secretion. Residues 228-264 (AAPPDSASESTPASTSYASSTTSATSTSTTSGSSGSS) are compositionally biased toward low complexity. The segment at 228-266 (AAPPDSASESTPASTSYASSTTSATSTSTTSGSSGSSDW) is disordered. Positions 412–417 (EFDIFE) match the ExDxxE motif motif. N-linked (GlcNAc...) asparagine glycosylation is present at asparagine 480.

The protein belongs to the PGA52 family.

The protein localises to the secreted. It catalyses the reaction Hydrolysis of (1-&gt;3)-beta-D-glucosidic linkages in (1-&gt;3)-beta-D-glucans.. Probable circularly permuted 1,3-beta-glucanase involved in cell wall modification through beta-1,3-glucan network alterations such as increased branching or remodeling. The sequence is that of Probable circularly permuted 1,3-beta-glucanase P23A10.11c YJL171C from Schizosaccharomyces pombe (strain 972 / ATCC 24843) (Fission yeast).